The primary structure comprises 141 residues: MLLHVIARGKIGRSPEAELVDRYARRISWGWKVTELPDRGGTVPPPSHTPSRTVAMDERGRQLTSSEFAAILGRWRDDGVRETRFLIGAADGHDEALRESADLLIAFGNATWPHMLARAMLAEQLWRATSILAGHPYHREG.

An S-adenosyl-L-methionine-binding site is contributed by Gly88.

It belongs to the RNA methyltransferase RlmH family. As to quaternary structure, homodimer.

The protein localises to the cytoplasm. It carries out the reaction pseudouridine(1915) in 23S rRNA + S-adenosyl-L-methionine = N(3)-methylpseudouridine(1915) in 23S rRNA + S-adenosyl-L-homocysteine + H(+). Its function is as follows. Specifically methylates the pseudouridine at position 1915 (m3Psi1915) in 23S rRNA. The polypeptide is Ribosomal RNA large subunit methyltransferase H (Novosphingobium aromaticivorans (strain ATCC 700278 / DSM 12444 / CCUG 56034 / CIP 105152 / NBRC 16084 / F199)).